The sequence spans 399 residues: 3-methyl-2-oxobutanoate hydroxymethyltransferase 2, mitochondrial (399 aa).

Residues 1-90 constitute a mitochondrion transit peptide; the sequence is MSFSRLLTPR…ARRVTLATLR (90 aa). Residues Asp-125 and Asp-164 each coordinate Mg(2+). 3-methyl-2-oxobutanoate contacts are provided by residues 125–126, Asp-164, and Lys-194; that span reads DS. Glu-196 provides a ligand contact to Mg(2+). The active-site Proton acceptor is Glu-264.

It belongs to the PanB family. The cofactor is Mg(2+).

Its subcellular location is the mitochondrion. It carries out the reaction 3-methyl-2-oxobutanoate + (6R)-5,10-methylene-5,6,7,8-tetrahydrofolate + H2O = 2-dehydropantoate + (6S)-5,6,7,8-tetrahydrofolate. Its pathway is cofactor biosynthesis; (R)-pantothenate biosynthesis; (R)-pantoate from 3-methyl-2-oxobutanoate: step 1/2. Catalyzes the reversible reaction in which hydroxymethyl group from 5,10-methylenetetrahydrofolate is transferred onto alpha-ketoisovalerate to form ketopantoate. The chain is 3-methyl-2-oxobutanoate hydroxymethyltransferase 2, mitochondrial (KPHMT2) from Oryza sativa subsp. japonica (Rice).